The primary structure comprises 702 residues: MA3 DOMAIN-CONTAINING TRANSLATION REGULATORY FACTOR 3 (702 aa).

Residues 1-100 (MEGFLTDQQR…PNDPNYDSGE (100 aa)) form a disordered region. Positions 53–65 (VKHRRSHAGRSIR) are enriched in basic residues. The span at 81-91 (IDTDGDYHIDP) shows a compositional bias: basic and acidic residues. In terms of domain architecture, MI 1 spans 116 to 237 (DYKKAAASII…PPAFLPRAAK (122 aa)). A Nuclear localization signal 1 motif is present at residues 267–274 (ERRWGGQT). 3 consecutive MI domains span residues 280–401 (EVKK…PSGE), 414–535 (RFKE…EISS), and 577–697 (DAKD…SLTE). A Nuclear localization signal 2 motif is present at residues 615–622 (VKKALVMG).

This sequence belongs to the PDCD4 family. In terms of assembly, interacts with EIN2, ETR2 and EIN4. Binds to EIF4A1. The association with ribosomes is modulated by cellular energy status and TOR activity. Mostly expressed in vegetative tissues, such as leaves and stems, and, to a lower extent, in roots and reproductive tissues, such as flower buds and flowers. Expressed in seedlings, roots, cauline leaf tips and flowers.

It is found in the nucleus. The protein resides in the cytoplasm. It localises to the cytosol. Functionally, involved in target of rapamycin (TOR)-regulated translation control, especially under energy-deficient conditions. Involved in the regulation of the ethylene-mediated signaling pathway. Involved in salt stress responses. Reduced cotyledons size and early flowering. This chain is MA3 DOMAIN-CONTAINING TRANSLATION REGULATORY FACTOR 3, found in Arabidopsis thaliana (Mouse-ear cress).